A 72-amino-acid polypeptide reads, in one-letter code: Translation initiation factor IF-1 (72 aa).

The S1-like domain occupies 1-72 (MAKDDVIEVD…DKGRITFRYK (72 aa)).

This sequence belongs to the IF-1 family. Component of the 30S ribosomal translation pre-initiation complex which assembles on the 30S ribosome in the order IF-2 and IF-3, IF-1 and N-formylmethionyl-tRNA(fMet); mRNA recruitment can occur at any time during PIC assembly.

Its subcellular location is the cytoplasm. Its function is as follows. One of the essential components for the initiation of protein synthesis. Stabilizes the binding of IF-2 and IF-3 on the 30S subunit to which N-formylmethionyl-tRNA(fMet) subsequently binds. Helps modulate mRNA selection, yielding the 30S pre-initiation complex (PIC). Upon addition of the 50S ribosomal subunit IF-1, IF-2 and IF-3 are released leaving the mature 70S translation initiation complex. The protein is Translation initiation factor IF-1 of Nitratiruptor sp. (strain SB155-2).